A 492-amino-acid chain; its full sequence is Spore germination protein GerLA (492 aa).

3 helical membrane passes run 295–315 (IIAVLLPAMYVALVSYHQGLI), 384–404 (FLVIIIAVTAIATFSLPVYSI), and 410–430 (ILLFVFVLAATAFGLYGIILA).

It belongs to the GerABKA family.

The protein resides in the membrane. Contributes to the L-alanine germination response. The polypeptide is Spore germination protein GerLA (gerLA) (Bacillus cereus).